A 521-amino-acid polypeptide reads, in one-letter code: Probable protein kinase UbiB (521 aa).

The Protein kinase domain occupies 119 to 497 (QFDETPIASA…QKRTNRLLQT (379 aa)). ATP-binding positions include 125-133 (IASASIAQV) and K151. D286 acts as the Proton acceptor in catalysis. Residues 496–516 (QTIIYGGIGFVLGLLAMQLLV) form a helical membrane-spanning segment.

This sequence belongs to the ABC1 family. UbiB subfamily.

The protein localises to the cell inner membrane. Its pathway is cofactor biosynthesis; ubiquinone biosynthesis [regulation]. Its function is as follows. Is probably a protein kinase regulator of UbiI activity which is involved in aerobic coenzyme Q (ubiquinone) biosynthesis. In Variovorax paradoxus (strain S110), this protein is Probable protein kinase UbiB.